The sequence spans 178 residues: Probable inosine/xanthosine triphosphatase (178 aa).

The protein belongs to the YjjX NTPase family. Homodimer. The cofactor is Mg(2+). Mn(2+) is required as a cofactor.

The catalysed reaction is XTP + H2O = XDP + phosphate + H(+). It carries out the reaction ITP + H2O = IDP + phosphate + H(+). In terms of biological role, phosphatase that hydrolyzes non-canonical purine nucleotides such as XTP and ITP to their respective diphosphate derivatives. Probably excludes non-canonical purines from DNA/RNA precursor pool, thus preventing their incorporation into DNA/RNA and avoiding chromosomal lesions. This chain is Probable inosine/xanthosine triphosphatase, found in Pyrobaculum calidifontis (strain DSM 21063 / JCM 11548 / VA1).